We begin with the raw amino-acid sequence, 113 residues long: UPF0251 protein TK0562 (113 aa).

It belongs to the UPF0251 family.

The chain is UPF0251 protein TK0562 from Thermococcus kodakarensis (strain ATCC BAA-918 / JCM 12380 / KOD1) (Pyrococcus kodakaraensis (strain KOD1)).